The chain runs to 261 residues: Phosphatidylglycerol--prolipoprotein diacylglyceryl transferase (261 aa).

The next 3 membrane-spanning stretches (helical) occupy residues 20 to 40 (LAIH…VWLA), 54 to 74 (IIDF…LYYV), and 88 to 108 (IIAI…GAIV). Arginine 139 contacts a 1,2-diacyl-sn-glycero-3-phospho-(1'-sn-glycerol). The next 2 helical transmembrane spans lie at 175 to 195 (MPTF…VMVF) and 235 to 255 (ARVS…LFVY).

The protein belongs to the Lgt family.

The protein resides in the cell membrane. The catalysed reaction is L-cysteinyl-[prolipoprotein] + a 1,2-diacyl-sn-glycero-3-phospho-(1'-sn-glycerol) = an S-1,2-diacyl-sn-glyceryl-L-cysteinyl-[prolipoprotein] + sn-glycerol 1-phosphate + H(+). It functions in the pathway protein modification; lipoprotein biosynthesis (diacylglyceryl transfer). Catalyzes the transfer of the diacylglyceryl group from phosphatidylglycerol to the sulfhydryl group of the N-terminal cysteine of a prolipoprotein, the first step in the formation of mature lipoproteins. This Lactococcus lactis subsp. cremoris (strain MG1363) protein is Phosphatidylglycerol--prolipoprotein diacylglyceryl transferase.